A 1518-amino-acid polypeptide reads, in one-letter code: Probable serine/threonine-protein kinase HSL1 (1518 aa).

Disordered stretches follow at residues 1–43 and 55–83; these read MTGH…GHLE and RLSQPDSTVSVATKSSKRKSRDTVGPWKL. Over residues 55-68 the composition is skewed to polar residues; the sequence is RLSQPDSTVSVATK. The Protein kinase domain occupies 81–369; the sequence is WKLGKTLGKG…TQEILKHPLI (289 aa). Residues 87 to 95 and lysine 110 each bind ATP; that span reads LGKGSSGRV. The active-site Proton acceptor is aspartate 239. Positions 467–502 are disordered; it reads LSSSSENKKSATESSVNEPRIEYASKTANNTGLRSE. A compositionally biased stretch (polar residues) spans 492–501; sequence KTANNTGLRS. The residue at position 511 (serine 511) is a Phosphoserine. Low complexity predominate over residues 599–611; it reads SNSRLSLSASTSR. A disordered region spans residues 599–651; it reads SNSRLSLSASTSRETVHDNEMPLPQLPKSPSRYSLSRRAIHASPSTKSIHKSL. Residues serine 629 and serine 685 each carry the phosphoserine modification. Residues 741 to 783 form a disordered region; the sequence is EEEDNEKERDTQRQRQNDTKSSADTFTISGVSTNKENEGPEYP. The segment covering 746-758 has biased composition (basic and acidic residues); it reads EKERDTQRQRQND. Polar residues predominate over residues 759 to 774; sequence TKSSADTFTISGVSTN. A phosphoserine mark is found at serine 837 and serine 866. Over residues 856-876 the composition is skewed to basic and acidic residues; sequence EQLQKKNDRPSPLKPIQHQEL. Disordered stretches follow at residues 856-898, 1005-1030, 1150-1170, and 1220-1243; these read EQLQ…RRNI, DDKHLSVPQNQSRSVAMSHPLRKQSA, APSDEGSLNTSSSESDSRASV, and SPENPSNTHMQKRFSSTRGSRDSN. Phosphoserine is present on serine 1220. Positions 1222 to 1243 are enriched in polar residues; it reads ENPSNTHMQKRFSSTRGSRDSN. Serine 1250 carries the post-translational modification Phosphoserine. The disordered stretch occupies residues 1259 to 1291; that stretch reads EEDQDGHTSQADILESSMSYSKRRPSEESVNPK. Residues 1265–1278 are compositionally biased toward polar residues; it reads HTSQADILESSMSY. Serine 1284, serine 1287, and serine 1325 each carry phosphoserine.

Belongs to the protein kinase superfamily. CAMK Ser/Thr protein kinase family. NIM1 subfamily.

It is found in the bud neck. The enzyme catalyses L-seryl-[protein] + ATP = O-phospho-L-seryl-[protein] + ADP + H(+). It catalyses the reaction L-threonyl-[protein] + ATP = O-phospho-L-threonyl-[protein] + ADP + H(+). The protein is Probable serine/threonine-protein kinase HSL1 (HSL1) of Saccharomyces cerevisiae (strain ATCC 204508 / S288c) (Baker's yeast).